Reading from the N-terminus, the 382-residue chain is Pectinesterase (382 aa).

Residues 1–16 (MKIIVLLLLAVVLASA) form the signal peptide. Cys153 and Cys164 form a disulfide bridge. Residue Asn179 is glycosylated (N-linked (GlcNAc...) asparagine). Gln193 is a binding site for substrate. Catalysis depends on Asp216, which acts as the Proton donor. Catalysis depends on Asp242, which acts as the Nucleophile. The substrate site is built by Arg306 and Trp308. Asn340 and Asn376 each carry an N-linked (GlcNAc...) asparagine glycan.

The protein belongs to the pectinesterase family. In terms of tissue distribution, expressed throughout the midgut with particularly strong expression in the ventriculus.

The protein resides in the secreted. The catalysed reaction is [(1-&gt;4)-alpha-D-galacturonosyl methyl ester](n) + n H2O = [(1-&gt;4)-alpha-D-galacturonosyl](n) + n methanol + n H(+). The protein operates within glycan metabolism; pectin degradation; 2-dehydro-3-deoxy-D-gluconate from pectin: step 1/5. In terms of biological role, pectinesterase which probably plays an important role in the digestion of plant cell walls. In Sitophilus oryzae (Rice weevil), this protein is Pectinesterase.